Here is a 323-residue protein sequence, read N- to C-terminus: Ubiquinone biosynthesis protein COQ4, mitochondrial (323 aa).

Residues His-209, Asp-210, His-213, and Glu-225 each contribute to the Zn(2+) site.

The protein belongs to the COQ4 family. As to quaternary structure, component of a multi-subunit COQ enzyme complex, composed of at least COQ3, COQ4, COQ5, COQ6, COQ7 and COQ9. It depends on Zn(2+) as a cofactor.

It is found in the mitochondrion inner membrane. It carries out the reaction a 4-hydroxy-3-methoxy-5-(all-trans-polyprenyl)benzoate + H(+) = a 2-methoxy-6-(all-trans-polyprenyl)phenol + CO2. It participates in cofactor biosynthesis; ubiquinone biosynthesis. Its function is as follows. Lyase that catalyzes the C1-decarboxylation of 4-hydroxy-3-methoxy-5-(all-trans-polyprenyl)benzoic acid into 2-methoxy-6-(all-trans-polyprenyl)phenol during ubiquinone biosynthesis. In Debaryomyces hansenii (strain ATCC 36239 / CBS 767 / BCRC 21394 / JCM 1990 / NBRC 0083 / IGC 2968) (Yeast), this protein is Ubiquinone biosynthesis protein COQ4, mitochondrial.